Reading from the N-terminus, the 125-residue chain is Small ribosomal subunit protein uS12c (125 aa).

The tract at residues 1 to 23 is disordered; the sequence is MPTLEHLTRSPRKKIKRKTKSPA. Residues 9-20 are compositionally biased toward basic residues; that stretch reads RSPRKKIKRKTK.

The protein belongs to the universal ribosomal protein uS12 family. Part of the 30S ribosomal subunit.

It localises to the plastid. It is found in the chloroplast. Its function is as follows. With S4 and S5 plays an important role in translational accuracy. Located at the interface of the 30S and 50S subunits. The polypeptide is Small ribosomal subunit protein uS12c (rps12) (Euglena gracilis).